The sequence spans 484 residues: ATP synthase subunit beta (484 aa).

156-163 (GGAGVGKT) lines the ATP pocket.

It belongs to the ATPase alpha/beta chains family. F-type ATPases have 2 components, CF(1) - the catalytic core - and CF(0) - the membrane proton channel. CF(1) has five subunits: alpha(3), beta(3), gamma(1), delta(1), epsilon(1). CF(0) has three main subunits: a(1), b(2) and c(9-12). The alpha and beta chains form an alternating ring which encloses part of the gamma chain. CF(1) is attached to CF(0) by a central stalk formed by the gamma and epsilon chains, while a peripheral stalk is formed by the delta and b chains.

Its subcellular location is the cell inner membrane. It carries out the reaction ATP + H2O + 4 H(+)(in) = ADP + phosphate + 5 H(+)(out). Functionally, produces ATP from ADP in the presence of a proton gradient across the membrane. The catalytic sites are hosted primarily by the beta subunits. This is ATP synthase subunit beta from Rhizorhabdus wittichii (strain DSM 6014 / CCUG 31198 / JCM 15750 / NBRC 105917 / EY 4224 / RW1) (Sphingomonas wittichii).